The primary structure comprises 255 residues: 5'-nucleotidase SurE (255 aa).

Positions 8, 9, 40, and 93 each coordinate a divalent metal cation.

It belongs to the SurE nucleotidase family. The cofactor is a divalent metal cation.

The protein localises to the cytoplasm. It carries out the reaction a ribonucleoside 5'-phosphate + H2O = a ribonucleoside + phosphate. Its function is as follows. Nucleotidase that shows phosphatase activity on nucleoside 5'-monophosphates. The polypeptide is 5'-nucleotidase SurE (Nitrobacter hamburgensis (strain DSM 10229 / NCIMB 13809 / X14)).